The sequence spans 229 residues: Synaptogyrin-3 (229 aa).

N-acetylmethionine is present on methionine 1. In terms of domain architecture, MARVEL spans 20–172 (FARRPQTLLR…LTVKALQRFR (153 aa)). The next 4 helical transmembrane spans lie at 30 to 50 (VASWVFSIAVFGPIVNEGYVN), 70 to 90 (FGVALGLGAFLACSCFLLLDV), 105 to 125 (VLLDLGFSGLWSFLWFVGFCF), and 148 to 168 (AVITFSFFSILSWVALTVKAL).

Belongs to the synaptogyrin family. As to quaternary structure, interacts (via N-terminus) with SLC6A3 (via N-terminus). May interact with VMAT2.

It is found in the cytoplasmic vesicle. The protein resides in the secretory vesicle. Its subcellular location is the synaptic vesicle membrane. The protein localises to the synapse. Functionally, may play a role in regulated exocytosis. May indirectly regulate the activity of the plasma membrane dopamine transporter SLC6A3 and thereby regulate dopamine transport back from the synaptic cleft into the presynaptic terminal. The sequence is that of Synaptogyrin-3 from Bos taurus (Bovine).